The primary structure comprises 146 residues: Hemoglobin subunit beta (146 aa).

At Val1 the chain carries N-acetylvaline. One can recognise a Globin domain in the interval 2 to 146; that stretch reads HLTNEEKTAV…VATALAHKYH (145 aa). Position 44 is a phosphoserine (Ser44). Position 59 is an N6-acetyllysine (Lys59). His63 is a binding site for heme b. Residue Lys82 is modified to N6-acetyllysine. His92 is a binding site for heme b. Cys93 carries the post-translational modification S-nitrosocysteine. Lys144 carries the N6-acetyllysine modification.

It belongs to the globin family. In terms of assembly, heterotetramer of two alpha chains and two beta chains. As to expression, red blood cells.

Involved in oxygen transport from the lung to the various peripheral tissues. The sequence is that of Hemoglobin subunit beta (HBB) from Lyroderma lyra (Greater Asian false-vampire bat).